The following is a 280-amino-acid chain: 4-hydroxy-3-methylbut-2-enyl diphosphate reductase (280 aa).

Cys12 is a [4Fe-4S] cluster binding site. (2E)-4-hydroxy-3-methylbut-2-enyl diphosphate contacts are provided by His40 and His72. Positions 40 and 72 each coordinate dimethylallyl diphosphate. Residues His40 and His72 each coordinate isopentenyl diphosphate. Residue Cys94 coordinates [4Fe-4S] cluster. Residue His122 participates in (2E)-4-hydroxy-3-methylbut-2-enyl diphosphate binding. His122 provides a ligand contact to dimethylallyl diphosphate. His122 contributes to the isopentenyl diphosphate binding site. Glu124 functions as the Proton donor in the catalytic mechanism. A (2E)-4-hydroxy-3-methylbut-2-enyl diphosphate-binding site is contributed by Thr160. A [4Fe-4S] cluster-binding site is contributed by Cys188. (2E)-4-hydroxy-3-methylbut-2-enyl diphosphate contacts are provided by Ser216, Asn218, and Ser260. Ser216, Asn218, and Ser260 together coordinate dimethylallyl diphosphate. The isopentenyl diphosphate site is built by Ser216, Asn218, and Ser260.

It belongs to the IspH family. [4Fe-4S] cluster serves as cofactor.

The catalysed reaction is isopentenyl diphosphate + 2 oxidized [2Fe-2S]-[ferredoxin] + H2O = (2E)-4-hydroxy-3-methylbut-2-enyl diphosphate + 2 reduced [2Fe-2S]-[ferredoxin] + 2 H(+). The enzyme catalyses dimethylallyl diphosphate + 2 oxidized [2Fe-2S]-[ferredoxin] + H2O = (2E)-4-hydroxy-3-methylbut-2-enyl diphosphate + 2 reduced [2Fe-2S]-[ferredoxin] + 2 H(+). The protein operates within isoprenoid biosynthesis; dimethylallyl diphosphate biosynthesis; dimethylallyl diphosphate from (2E)-4-hydroxy-3-methylbutenyl diphosphate: step 1/1. It functions in the pathway isoprenoid biosynthesis; isopentenyl diphosphate biosynthesis via DXP pathway; isopentenyl diphosphate from 1-deoxy-D-xylulose 5-phosphate: step 6/6. Its function is as follows. Catalyzes the conversion of 1-hydroxy-2-methyl-2-(E)-butenyl 4-diphosphate (HMBPP) into a mixture of isopentenyl diphosphate (IPP) and dimethylallyl diphosphate (DMAPP). Acts in the terminal step of the DOXP/MEP pathway for isoprenoid precursor biosynthesis. In Trichlorobacter lovleyi (strain ATCC BAA-1151 / DSM 17278 / SZ) (Geobacter lovleyi), this protein is 4-hydroxy-3-methylbut-2-enyl diphosphate reductase.